A 159-amino-acid polypeptide reads, in one-letter code: uncharacterized protein (159 aa).

The protein belongs to the mimivirus L15/L51/R83 family.

This is an uncharacterized protein from Acanthamoeba polyphaga mimivirus (APMV).